Reading from the N-terminus, the 451-residue chain is L-seryl-tRNA(Sec) selenium transferase (451 aa).

K286 carries the N6-(pyridoxal phosphate)lysine modification.

Belongs to the SelA family. Pyridoxal 5'-phosphate serves as cofactor.

Its subcellular location is the cytoplasm. The enzyme catalyses L-seryl-tRNA(Sec) + selenophosphate + H(+) = L-selenocysteinyl-tRNA(Sec) + phosphate. The protein operates within aminoacyl-tRNA biosynthesis; selenocysteinyl-tRNA(Sec) biosynthesis; selenocysteinyl-tRNA(Sec) from L-seryl-tRNA(Sec) (bacterial route): step 1/1. Functionally, converts seryl-tRNA(Sec) to selenocysteinyl-tRNA(Sec) required for selenoprotein biosynthesis. This Aliarcobacter butzleri (strain RM4018) (Arcobacter butzleri) protein is L-seryl-tRNA(Sec) selenium transferase.